The primary structure comprises 478 residues: MFKFHQMKHIFEILDKMRCLRKRSTVSFLGVLVIFLLFMNLYIEDSYVLEGDKQLIRETSTHQLNSERYVHTFKDLSNFSGAINVTYRYLAATPLQRKRYLTIGLSSVKRKKGNYLLETIKSIFEQSSYEELKEISVVVHLADFNSSWRDAMVQDITQKFAHHIIAGRLMVIHAPEEYYPILDGLKRNYNDPEDRVKFRSKQNVDYAFLLNFCANTSDYYVMLEDDVRCSKNFLTAIKKVIASLEGTYWVTLEFSKLGYIGKLYHSHDLPRLAHFLLMFYQEMPCDWLLTHFRGLLAQKNVIRFKPSLFQHMGYYSSYKGTENKLKDDDFEEESFDIPDNPPASLYTNMNVFENYEASKAYSSVDEYFWGKPPSTGDVFVIVFENPIIIKKIKVNTGTEDRQNDILHHGALDVGENVMPSKRRRQCSTYLRLGEFKNGNFEMSGVNQKIPFDIHCMRIYVTKTQKEWLIIRSISIWTS.

Residues 1–23 (MFKFHQMKHIFEILDKMRCLRKR) lie on the Cytoplasmic side of the membrane. The chain crosses the membrane as a helical; Signal-anchor for type II membrane protein span at residues 24-44 (STVSFLGVLVIFLLFMNLYIE). The Lumenal portion of the chain corresponds to 45–478 (DSYVLEGDKQ…IIRSISIWTS (434 aa)). Residues Asn-84 and Asn-215 are each glycosylated (N-linked (GlcNAc...) asparagine).

It belongs to the glycosyltransferase 54 family. Requires a divalent metal cation as cofactor.

It localises to the golgi apparatus membrane. It catalyses the reaction N(4)-{beta-D-GlcNAc-(1-&gt;2)-alpha-D-Man-(1-&gt;3)-[beta-D-GlcNAc-(1-&gt;2)-alpha-D-Man-(1-&gt;6)]-beta-D-Man-(1-&gt;4)-beta-D-GlcNAc-(1-&gt;4)-beta-D-GlcNAc}-L-asparaginyl-[protein] + UDP-N-acetyl-alpha-D-glucosamine = N(4)-{beta-D-GlcNAc-(1-&gt;2)-[beta-D-GlcNAc-(1-&gt;4)]-alpha-D-Man-(1-&gt;3)-[beta-D-GlcNAc-(1-&gt;2)-alpha-D-Man-(1-&gt;6)]-beta-D-Man-(1-&gt;4)-beta-D-GlcNAc-(1-&gt;4)-beta-D-GlcNAc}-L-asparaginyl-[protein] + UDP + H(+). Its pathway is protein modification; protein glycosylation. Its function is as follows. Glycosyltransferase that participates in the transfer of N-acetylglucosamine (GlcNAc) to the core mannose residues of N-linked glycans. Catalyzes the formation of the GlcNAcbeta1-4 branch on the GlcNAcbeta1-2Manalpha1-3 arm of the core structure of N-linked glycans. Essential for the production of tri- and tetra-antennary N-linked sugar chains. Does not catalyze the transfer of GlcNAc to the Manalpha1-6 arm to form GlcNAcBeta1-4Manalpha1-6 linkage ('GnT-VI' activity). This Macaca fascicularis (Crab-eating macaque) protein is Alpha-1,3-mannosyl-glycoprotein 4-beta-N-acetylglucosaminyltransferase C (MGAT4C).